The following is a 495-amino-acid chain: Trimethylamine methyltransferase MttB1 (495 aa).

Position 334 (O334) is a non-standard amino acid, pyrrolysine.

It belongs to the trimethylamine methyltransferase family. In terms of assembly, can form a complex with MttC.

The catalysed reaction is Co(I)-[trimethylamine-specific corrinoid protein] + trimethylamine + H(+) = methyl-Co(III)-[trimethylamine-specific corrinoid protein] + dimethylamine. The protein operates within one-carbon metabolism; methanogenesis from trimethylamine. In terms of biological role, catalyzes the transfer of a methyl group from trimethylamine to the corrinoid cofactor of MttC. The protein is Trimethylamine methyltransferase MttB1 (mttB1) of Methanosarcina acetivorans (strain ATCC 35395 / DSM 2834 / JCM 12185 / C2A).